Reading from the N-terminus, the 457-residue chain is ATP synthase subunit beta (457 aa).

150-157 serves as a coordination point for ATP; the sequence is GGAGVGKT.

This sequence belongs to the ATPase alpha/beta chains family. As to quaternary structure, F-type ATPases have 2 components, CF(1) - the catalytic core - and CF(0) - the membrane proton channel. CF(1) has five subunits: alpha(3), beta(3), gamma(1), delta(1), epsilon(1). CF(0) has three main subunits: a(1), b(2) and c(9-12). The alpha and beta chains form an alternating ring which encloses part of the gamma chain. CF(1) is attached to CF(0) by a central stalk formed by the gamma and epsilon chains, while a peripheral stalk is formed by the delta and b chains.

The protein resides in the cell membrane. The enzyme catalyses ATP + H2O + 4 H(+)(in) = ADP + phosphate + 5 H(+)(out). In terms of biological role, produces ATP from ADP in the presence of a proton gradient across the membrane. The catalytic sites are hosted primarily by the beta subunits. The polypeptide is ATP synthase subunit beta (Baumannia cicadellinicola subsp. Homalodisca coagulata).